The chain runs to 119 residues: Circadian clock oscillator protein KaiB (119 aa).

Belongs to the KaiB family. May undergo a major conformational rearrangment; in the free state forms homooligomers. When bound to KaiC switches to a monomeric thioredoxin-fold (KaiB(fs)). The active oscillator complex is probably KaiC(6):KaiB(6).

In terms of biological role, component of the KaiBC clock protein complex, which constitutes the main circadian regulator in cyanobacteria; it may modify the ATPase activity of KaiC. Its function is as follows. May be a metamorphic protein which reversibly switches between an inactive tetrameric fold and a rare, thioredoxin-like monomeric fold (KaiB(fs)). KaiB(fs) binds phospho-KaiC, and perhaps clock output effectors. The polypeptide is Circadian clock oscillator protein KaiB (Prochlorococcus marinus (strain MIT 9303)).